Consider the following 492-residue polypeptide: 3-octaprenyl-4-hydroxybenzoate carboxy-lyase (492 aa).

N177 is a Mn(2+) binding site. Prenylated FMN-binding positions include 180–182, 194–196, and 199–200; these read IYR, RWL, and RG. E243 is a binding site for Mn(2+). The Proton donor role is filled by D292.

This sequence belongs to the UbiD family. As to quaternary structure, homohexamer. Prenylated FMN serves as cofactor. Requires Mn(2+) as cofactor.

The protein localises to the cell membrane. It carries out the reaction a 4-hydroxy-3-(all-trans-polyprenyl)benzoate + H(+) = a 2-(all-trans-polyprenyl)phenol + CO2. Its pathway is cofactor biosynthesis; ubiquinone biosynthesis. Its function is as follows. Catalyzes the decarboxylation of 3-octaprenyl-4-hydroxy benzoate to 2-octaprenylphenol, an intermediate step in ubiquinone biosynthesis. The sequence is that of 3-octaprenyl-4-hydroxybenzoate carboxy-lyase from Neisseria meningitidis serogroup B (strain ATCC BAA-335 / MC58).